A 303-amino-acid chain; its full sequence is MRLRHVVSSLDLTRDDYFRIFELADKFYDVKKLNYLSGKVVSLAFFEPSTRTAQSFHTAAIKLGADVIGFASEESTSIAKGENLADTIRMLNNYSNCIVMRHKFDGAALFASEISDIPIINAGDGKHEHPTQAVIDLYTVYKAFGEIDGRTFALLGDLKYARTVNSLLRALTRFKPKKVFLISPSQLKVRREILDELNYPVIETENPYDVIQEIDVLYVTRIQKERFVDEVEYEKVKESYVVDLKLVNMMKKDGIILHPLPRVTEIDRRVDKTVNAKYFYQASLAVPVRMALFYEVLGDREDD.

R51 and T52 together coordinate carbamoyl phosphate. K80 provides a ligand contact to L-aspartate. Positions 101, 129, and 132 each coordinate carbamoyl phosphate. 2 residues coordinate L-aspartate: R162 and R221. Carbamoyl phosphate is bound by residues L260 and P261.

Belongs to the aspartate/ornithine carbamoyltransferase superfamily. ATCase family. In terms of assembly, heterooligomer of catalytic and regulatory chains.

The enzyme catalyses carbamoyl phosphate + L-aspartate = N-carbamoyl-L-aspartate + phosphate + H(+). The protein operates within pyrimidine metabolism; UMP biosynthesis via de novo pathway; (S)-dihydroorotate from bicarbonate: step 2/3. In terms of biological role, catalyzes the condensation of carbamoyl phosphate and aspartate to form carbamoyl aspartate and inorganic phosphate, the committed step in the de novo pyrimidine nucleotide biosynthesis pathway. This chain is Aspartate carbamoyltransferase catalytic subunit, found in Saccharolobus solfataricus (strain ATCC 35092 / DSM 1617 / JCM 11322 / P2) (Sulfolobus solfataricus).